The chain runs to 313 residues: Ribosomal RNA small subunit methyltransferase H (313 aa).

S-adenosyl-L-methionine contacts are provided by residues 34–36, Asp55, Phe82, Asp103, and Gln110; that span reads GGH.

It belongs to the methyltransferase superfamily. RsmH family.

It is found in the cytoplasm. It carries out the reaction cytidine(1402) in 16S rRNA + S-adenosyl-L-methionine = N(4)-methylcytidine(1402) in 16S rRNA + S-adenosyl-L-homocysteine + H(+). In terms of biological role, specifically methylates the N4 position of cytidine in position 1402 (C1402) of 16S rRNA. The protein is Ribosomal RNA small subunit methyltransferase H of Pelobacter propionicus (strain DSM 2379 / NBRC 103807 / OttBd1).